The sequence spans 2293 residues: G-protein coupled receptor 179 (2293 aa).

An N-terminal signal peptide occupies residues 1–27 (MGARAVVISSLAWGLLSCCFLCSGALG). The segment at 62–245 (FLYSGDVQRL…CHEGQLRPGW (184 aa)) is cache-like region. N75 is a glycosylation site (N-linked (GlcNAc...) asparagine). C76 and C236 are joined by a disulfide. The N-linked (GlcNAc...) asparagine glycan is linked to N298. The next 7 membrane-spanning stretches (helical) occupy residues 383-403 (AVLA…LVAY), 416-436 (IVLL…VFIL), 445-465 (CVAL…TIIL), 494-514 (LGQL…GALE), 544-564 (YIMV…CYAT), 585-602 (LLLS…VPSL), and 608-628 (LLLF…LIFI). A disulfide bridge links C445 with C537. N-linked (GlcNAc...) asparagine glycosylation occurs at N661. The disordered stretch occupies residues 733-812 (QHSRDSGSLG…GRESLADGPP (80 aa)). Residues 738 to 759 (SGSLGLGSLPGSSRRRLLSSSL) show a composition bias toward low complexity. Positions 773–782 (STYDHHREHN) are enriched in basic and acidic residues. N-linked (GlcNAc...) asparagine glycosylation occurs at N823. 11 disordered regions span residues 872–935 (EERK…HPPI), 1046–1235 (GTGE…NPAL), 1275–1294 (ERTE…LSRS), 1326–1345 (EAVC…QLVH), 1388–1411 (GTST…ATFW), 1479–1560 (ELAG…HGGS), 1578–1770 (ATLS…VCPW), 1792–1828 (TVGK…TSKG), 1844–1882 (WKPP…KGEL), 1924–2051 (SSSH…GSEK), and 2212–2293 (FLPE…WDCE). The span at 1080 to 1089 (LKTPLQQGSV) shows a compositional bias: polar residues. 3 stretches are compositionally biased toward basic and acidic residues: residues 1105 to 1123 (TYKE…KGKP), 1173 to 1186 (CQKE…DRNK), and 1275 to 1286 (ERTEGGSLEKKP). Composition is skewed to basic and acidic residues over residues 1546–1555 (ASSKAGEKLL) and 1597–1632 (RTSE…RIQK). Over residues 1644–1663 (PGSTPQRDTEKAQASLQRQG) the composition is skewed to polar residues. Composition is skewed to basic and acidic residues over residues 1682–1698 (GEER…RPND) and 1717–1728 (KKSERLGSEKEV). Over residues 1737 to 1747 (PGDSSQQPDTP) the composition is skewed to polar residues. Basic and acidic residues-rich tracts occupy residues 1748-1761 (NTEK…EHGS), 1796-1813 (GLER…RQNL), and 1872-1882 (ASDRASEKGEL). The segment covering 1937 to 1948 (RVSSQPLVSTGD) has biased composition (polar residues). Residues 1979–2007 (TETEMSRQDEKEKSQEEKERAPETRDHEG) are compositionally biased toward basic and acidic residues. A compositionally biased stretch (pro residues) spans 2283–2293 (SPPPDYPWDCE).

Belongs to the G-protein coupled receptor 3 family. Homodimer. Associates with the R7 group RGS-GNB5 complexes, composed of an R7 group RGS subunit (RGS6, RGS7, RGS9 or RGS11) and GNB5, promoting their localization to the cell membrane and regulating the GTPase activator activity of R7 RGS proteins. Interacts with TRPM1. Interacts with GRM6. Interacts with EGFLAM; transsynaptic interaction is required for synaptic organization of photoreceptor cells.

Its subcellular location is the cell membrane. The protein resides in the postsynaptic cell membrane. It localises to the cell projection. It is found in the dendrite. In terms of biological role, orphan receptor involved in vision. Required for signal transduction through retinal depolarizing bipolar cells. Acts as an atypical G-protein coupled receptor that recruits and regulates the R7 group RGS-GNB5 complexes instead of activating G proteins: promotes the GTPase activator activity of R7 RGS proteins, increasing the GTPase activity of G protein alpha subunits, thereby driving them into their inactive GDP-bound form. Associates with components of metabotropic signaling cascade in retina ON-bipolar neurons, such as TRPM1 and GRM6: may control the ability of the GRM6 cascade to gate TRPM1. The polypeptide is G-protein coupled receptor 179 (Mus musculus (Mouse)).